Here is a 545-residue protein sequence, read N- to C-terminus: CTP synthase (545 aa).

The amidoligase domain stretch occupies residues 1–266 (MATNYIFVTG…DTFVCDRFRL (266 aa)). Ser-14 is a binding site for CTP. Residue Ser-14 coordinates UTP. Residues 15–20 (SLGKGI) and Asp-72 contribute to the ATP site. Residues Asp-72 and Glu-140 each coordinate Mg(2+). Residues 147–149 (DIE), 187–192 (KTKPTQ), and Lys-223 each bind CTP. Residues 187 to 192 (KTKPTQ) and Lys-223 each bind UTP. 239 to 241 (KDV) is a binding site for ATP. Positions 291-542 (TIGMVGKYVE…VKAAKDYQDS (252 aa)) constitute a Glutamine amidotransferase type-1 domain. Gly-352 serves as a coordination point for L-glutamine. Catalysis depends on Cys-379, which acts as the Nucleophile; for glutamine hydrolysis. L-glutamine contacts are provided by residues 380–383 (LGMQ), Glu-403, and Arg-470. Active-site residues include His-515 and Glu-517.

This sequence belongs to the CTP synthase family. Homotetramer.

The enzyme catalyses UTP + L-glutamine + ATP + H2O = CTP + L-glutamate + ADP + phosphate + 2 H(+). It catalyses the reaction L-glutamine + H2O = L-glutamate + NH4(+). The catalysed reaction is UTP + NH4(+) + ATP = CTP + ADP + phosphate + 2 H(+). Its pathway is pyrimidine metabolism; CTP biosynthesis via de novo pathway; CTP from UDP: step 2/2. With respect to regulation, allosterically activated by GTP, when glutamine is the substrate; GTP has no effect on the reaction when ammonia is the substrate. The allosteric effector GTP functions by stabilizing the protein conformation that binds the tetrahedral intermediate(s) formed during glutamine hydrolysis. Inhibited by the product CTP, via allosteric rather than competitive inhibition. Functionally, catalyzes the ATP-dependent amination of UTP to CTP with either L-glutamine or ammonia as the source of nitrogen. Regulates intracellular CTP levels through interactions with the four ribonucleotide triphosphates. This is CTP synthase from Actinobacillus pleuropneumoniae serotype 7 (strain AP76).